The chain runs to 209 residues: ATP-dependent Clp protease proteolytic subunit 2 (209 aa).

Ser-106 (nucleophile) is an active-site residue. His-131 is a catalytic residue.

Belongs to the peptidase S14 family. As to quaternary structure, fourteen ClpP subunits assemble into 2 heptameric rings which stack back to back to give a disk-like structure with a central cavity, resembling the structure of eukaryotic proteasomes.

The protein localises to the cytoplasm. It catalyses the reaction Hydrolysis of proteins to small peptides in the presence of ATP and magnesium. alpha-casein is the usual test substrate. In the absence of ATP, only oligopeptides shorter than five residues are hydrolyzed (such as succinyl-Leu-Tyr-|-NHMec, and Leu-Tyr-Leu-|-Tyr-Trp, in which cleavage of the -Tyr-|-Leu- and -Tyr-|-Trp bonds also occurs).. In terms of biological role, cleaves peptides in various proteins in a process that requires ATP hydrolysis. Has a chymotrypsin-like activity. Plays a major role in the degradation of misfolded proteins. This is ATP-dependent Clp protease proteolytic subunit 2 from Rhizobium etli (strain ATCC 51251 / DSM 11541 / JCM 21823 / NBRC 15573 / CFN 42).